A 718-amino-acid polypeptide reads, in one-letter code: Exostosin-2 (718 aa).

Residues 1 to 25 are Cytoplasmic-facing; the sequence is MCASVKSNIRGPALIPRMKTKHRIY. Residues 26–46 form a helical; Signal-anchor for type II membrane protein membrane-spanning segment; it reads YVTLFSIVLLGLIATGMFQFW. Over 47 to 718 the chain is Lumenal; that stretch reads PHSIESSSDG…LKSFPNIGSL (672 aa). 4 cysteine pairs are disulfide-bonded: Cys-85-Cys-90, Cys-96-Cys-151, Cys-286-Cys-300, and Cys-318-Cys-339. A glycan (N-linked (GlcNAc...) asparagine) is linked at Asn-288. Leu-461, Arg-465, Asn-490, and Asn-517 together coordinate UDP. UDP-N-acetyl-alpha-D-glucosamine is bound by residues Arg-465, Asn-490, Asn-517, Arg-522, Asp-538, Asp-539, and Asp-540. Positions 538 and 539 each coordinate UDP. Asp-540 contributes to the Mn(2+) binding site. 2 residues coordinate a protein: Tyr-582 and Ser-584. Residues Cys-626 and Cys-676 are joined by a disulfide bond. Positions 627 and 628 each coordinate UDP-N-acetyl-alpha-D-glucosamine. A glycan (N-linked (GlcNAc...) asparagine) is linked at Asn-637. Lys-651 and Lys-653 together coordinate a protein. Arg-673 contributes to the UDP-N-acetyl-alpha-D-glucosamine binding site.

The protein belongs to the glycosyltransferase 47 family. In terms of assembly, part of the heparan sulfate polymerase, a dimeric complex composed of EXT1 and EXT2. Could also form homooligomeric complexes. Interacts with NDST1. Interacts with GALNT5. The cofactor is Mn(2+). Post-translationally, N-glycosylated at Asn-637. A soluble form is generated by proteolytic processing. Expressed in heart, brain, spleen, lung, liver, skeletal muscle and testis. Heart shows a high expression.

The protein resides in the golgi apparatus membrane. It localises to the golgi apparatus. It is found in the cis-Golgi network membrane. The protein localises to the endoplasmic reticulum membrane. Its subcellular location is the secreted. The catalysed reaction is 3-O-{[(1-&gt;4)-beta-D-GlcA-(1-&gt;4)-alpha-D-GlcNAc](n)-(1-&gt;4)-beta-D-GlcA-(1-&gt;3)-beta-D-Gal-(1-&gt;3)-beta-D-Gal-(1-&gt;4)-beta-D-Xyl}-L-seryl-[protein] + UDP-N-acetyl-alpha-D-glucosamine = 3-O-{alpha-D-GlcNAc-[(1-&gt;4)-beta-D-GlcA-(1-&gt;4)-alpha-D-GlcNAc](n)-(1-&gt;4)-beta-D-GlcA-(1-&gt;3)-beta-D-Gal-(1-&gt;3)-beta-D-Gal-(1-&gt;4)-beta-D-Xyl}-L-seryl-[protein] + UDP + H(+). It participates in protein modification; protein glycosylation. In terms of biological role, glycosyltransferase forming with EXT1 the heterodimeric heparan sulfate polymerase which catalyzes the elongation of the heparan sulfate glycan backbone. Glycan backbone extension consists in the alternating transfer of (1-&gt;4)-beta-D-GlcA and (1-&gt;4)-alpha-D-GlcNAc residues from their respective UDP-sugar donors. Both EXT1 and EXT2 are required for the full activity of the polymerase since EXT1 bears the N-acetylglucosaminyl-proteoglycan 4-beta-glucuronosyltransferase activity within the complex while EXT2 carries the glucuronosyl-N-acetylglucosaminyl-proteoglycan 4-alpha-N-acetylglucosaminyltransferase activity. Heparan sulfate proteoglycans are ubiquitous components of the extracellular matrix and play an important role in tissue homeostasis and signaling. In Mus musculus (Mouse), this protein is Exostosin-2.